The sequence spans 157 residues: 6,7-dimethyl-8-ribityllumazine synthase (157 aa).

5-amino-6-(D-ribitylamino)uracil-binding positions include Trp27, 59 to 61 (AIE), and 81 to 83 (VVI). Residue 86-87 (ET) coordinates (2S)-2-hydroxy-3-oxobutyl phosphate. His89 acts as the Proton donor in catalysis. Position 114 (Asn114) interacts with 5-amino-6-(D-ribitylamino)uracil. Arg128 provides a ligand contact to (2S)-2-hydroxy-3-oxobutyl phosphate.

This sequence belongs to the DMRL synthase family. As to quaternary structure, homopentamer.

The catalysed reaction is (2S)-2-hydroxy-3-oxobutyl phosphate + 5-amino-6-(D-ribitylamino)uracil = 6,7-dimethyl-8-(1-D-ribityl)lumazine + phosphate + 2 H2O + H(+). The protein operates within cofactor biosynthesis; riboflavin biosynthesis; riboflavin from 2-hydroxy-3-oxobutyl phosphate and 5-amino-6-(D-ribitylamino)uracil: step 1/2. Its function is as follows. Catalyzes the formation of 6,7-dimethyl-8-ribityllumazine by condensation of 5-amino-6-(D-ribitylamino)uracil with 3,4-dihydroxy-2-butanone 4-phosphate. This is the penultimate step in the biosynthesis of riboflavin. The sequence is that of 6,7-dimethyl-8-ribityllumazine synthase from Mycolicibacterium vanbaalenii (strain DSM 7251 / JCM 13017 / BCRC 16820 / KCTC 9966 / NRRL B-24157 / PYR-1) (Mycobacterium vanbaalenii).